Consider the following 256-residue polypeptide: Triosephosphate isomerase (256 aa).

Position 12–14 (12–14 (NWK)) interacts with substrate. His-99 acts as the Electrophile in catalysis. Glu-169 functions as the Proton acceptor in the catalytic mechanism. Substrate is bound by residues Gly-175, Ser-214, and 235 to 236 (GG).

The protein belongs to the triosephosphate isomerase family. Homodimer.

The protein localises to the cytoplasm. The enzyme catalyses D-glyceraldehyde 3-phosphate = dihydroxyacetone phosphate. The protein operates within carbohydrate biosynthesis; gluconeogenesis. Its pathway is carbohydrate degradation; glycolysis; D-glyceraldehyde 3-phosphate from glycerone phosphate: step 1/1. Its function is as follows. Involved in the gluconeogenesis. Catalyzes stereospecifically the conversion of dihydroxyacetone phosphate (DHAP) to D-glyceraldehyde-3-phosphate (G3P). The chain is Triosephosphate isomerase from Rhizobium meliloti (strain 1021) (Ensifer meliloti).